Reading from the N-terminus, the 232-residue chain is Glutathione-specific gamma-glutamylcyclotransferase (232 aa).

10–15 (VLGYGS) is a substrate binding site. The active-site Proton acceptor is Glu-115.

This sequence belongs to the gamma-glutamylcyclotransferase family. ChaC subfamily.

It localises to the cytoplasm. It is found in the nucleus. It catalyses the reaction glutathione = L-cysteinylglycine + 5-oxo-L-proline. Catalyzes the cleavage of glutathione into 5-oxo-L-proline and a Cys-Gly dipeptide. Acts specifically on glutathione, but not on other gamma-glutamyl peptides. Allows utilization of gluthathione through subsequent cleavage of the Cys-Gly dipeptide by Cys-Gly metallodipeptidase DUG1. This is Glutathione-specific gamma-glutamylcyclotransferase from Saccharomyces cerevisiae (strain ATCC 204508 / S288c) (Baker's yeast).